Consider the following 407-residue polypeptide: MNFIITTRDFSNDDSVLRAAEMRDNVAGSISKAYKGTVRAEGKKKLLLKHLPVPPGGCSRRNSNLFVFCTERDYRKFHQGIAQLKRAPAELDPHEIQQVTASIRCRLQPSLREPPTPADELQTAVSRVCALFNQLVFTAQLRHYCEHQDKVVSYARDELTKRCGEKSALGVEVHQLVALLPHERHRELCHVLIGLLHQTPHMWARSIRLIGHLRHYLQNSFLHLLMNSGLDIAQVFDGCYHSEAYRMLFQIGHTDSVSAALELSHGAAAGPPEADENNDEGEEDDDELRHSDPAPLHESKKPRNARRPRTRVPPHEQKPEENEEEEEELFPSCKATAAFLRAEPSVSNDDGNGGERCDTLATALRHRADEEDGPLASQTAVRVAATPSPSVTPALTPVTSPITPLCI.

2 disordered regions span residues 267–330 (AAAG…EELF) and 388–407 (SPSV…PLCI). Acidic residues predominate over residues 273–286 (EADENNDEGEEDDD). Over residues 287-301 (ELRHSDPAPLHESKK) the composition is skewed to basic and acidic residues. Basic residues predominate over residues 302–312 (PRNARRPRTRV).

Belongs to the HHV-5 UL34 protein family.

The protein localises to the host nucleus. In terms of biological role, acts as a transcriptional repressor of the US3 gene expression through a specific DNA sequence named the transcriptional repressive element (tre). The polypeptide is Transcriptional regulator UL34 (UL34) (Human cytomegalovirus (strain AD169) (HHV-5)).